The following is a 133-amino-acid chain: Small ribosomal subunit protein uS19 (133 aa).

The protein belongs to the universal ribosomal protein uS19 family.

Functionally, protein S19 forms a complex with S13 that binds strongly to the 16S ribosomal RNA. This is Small ribosomal subunit protein uS19 from Thermococcus gammatolerans (strain DSM 15229 / JCM 11827 / EJ3).